The following is a 230-amino-acid chain: MDKNSLWQRYVPLVRHEALRLQVRLPASVELDDLLQAGGIGLLNAVERYDRLQGTAFTTYAVQRIRGAMLDELRSRDWAPRSVRRNAREVASAMQKVEQRLGRPATEQEVAQNLDIDLTEYRQILLDTNNSQLFSYDEWREEHGESVEPMLEGHEDANPLQHLLEGNLRQRVIEAIEALPEREKMVLTLYYQEELNLKEIGAVLEVGESRVSQLHSQAIKRLRARLNNDS.

Positions 6–78 (LWQRYVPLVR…MLDELRSRDW (73 aa)) are sigma-70 factor domain-2. Residues 33–36 (DLLQ) carry the Interaction with polymerase core subunit RpoC motif. Residues 86–156 (NAREVASAMQ…VEPMLEGHED (71 aa)) are sigma-70 factor domain-3. The segment at 175–223 (AIEALPEREKMVLTLYYQEELNLKEIGAVLEVGESRVSQLHSQAIKRLR) is sigma-70 factor domain-4. Residues 197–216 (LKEIGAVLEVGESRVSQLHS) constitute a DNA-binding region (H-T-H motif).

Belongs to the sigma-70 factor family. FliA subfamily.

It localises to the cytoplasm. In terms of biological role, sigma factors are initiation factors that promote the attachment of RNA polymerase to specific initiation sites and are then released. This sigma factor controls the expression of flagella-related genes. In Yersinia enterocolitica, this protein is RNA polymerase sigma factor FliA.